The sequence spans 122 residues: Large ribosomal subunit protein bL12 (122 aa).

It belongs to the bacterial ribosomal protein bL12 family. Homodimer. Part of the ribosomal stalk of the 50S ribosomal subunit. Forms a multimeric L10(L12)X complex, where L10 forms an elongated spine to which 2 to 4 L12 dimers bind in a sequential fashion. Binds GTP-bound translation factors.

Forms part of the ribosomal stalk which helps the ribosome interact with GTP-bound translation factors. Is thus essential for accurate translation. The polypeptide is Large ribosomal subunit protein bL12 (Glaesserella parasuis serovar 5 (strain SH0165) (Haemophilus parasuis)).